Here is a 417-residue protein sequence, read N- to C-terminus: NADH-quinone oxidoreductase subunit D (417 aa).

The protein belongs to the complex I 49 kDa subunit family. NDH-1 is composed of 14 different subunits. Subunits NuoB, C, D, E, F, and G constitute the peripheral sector of the complex.

It localises to the cell inner membrane. The catalysed reaction is a quinone + NADH + 5 H(+)(in) = a quinol + NAD(+) + 4 H(+)(out). In terms of biological role, NDH-1 shuttles electrons from NADH, via FMN and iron-sulfur (Fe-S) centers, to quinones in the respiratory chain. The immediate electron acceptor for the enzyme in this species is believed to be ubiquinone. Couples the redox reaction to proton translocation (for every two electrons transferred, four hydrogen ions are translocated across the cytoplasmic membrane), and thus conserves the redox energy in a proton gradient. This Coxiella burnetii (strain RSA 331 / Henzerling II) protein is NADH-quinone oxidoreductase subunit D.